Consider the following 42-residue polypeptide: Delta-hexatoxin-Hv1a (42 aa).

Intrachain disulfides connect cysteine 1–cysteine 15, cysteine 8–cysteine 20, cysteine 14–cysteine 31, and cysteine 16–cysteine 42.

This sequence belongs to the neurotoxin 06 (delta-actx) family. As to expression, expressed by the venom gland.

The protein resides in the secreted. In terms of biological role, inhibits tetrodotoxin-sensitive voltage-gated sodium channels (Nav) by binding to site 3. Slows the inactivation, and causes a prolongation of action potential duration resulting in repetitive firing in autonomic and motor nerve fibers. Does not depolarize the resting potential. Does not affect tetrodotoxin-resistant sodium channels. This lethal neurotoxin is active on both insect and mammalian voltage-gated sodium channels. Pan-neuronal expression in Drosophila is lethal but flies engineered to express the toxin only in pacemaker neurons have profound defects in circadian rhythm but a normal lifespan. This is Delta-hexatoxin-Hv1a from Hadronyche versuta (Blue mountains funnel-web spider).